The sequence spans 77 residues: Acyl carrier protein (77 aa).

A Carrier domain is found at 2-77; it reads SSIDKRIKEI…DAIDYITDHT (76 aa). An O-(pantetheine 4'-phosphoryl)serine modification is found at Ser-37.

This sequence belongs to the acyl carrier protein (ACP) family. In terms of processing, 4'-phosphopantetheine is transferred from CoA to a specific serine of apo-ACP by AcpS. This modification is essential for activity because fatty acids are bound in thioester linkage to the sulfhydryl of the prosthetic group.

It localises to the cytoplasm. It functions in the pathway lipid metabolism; fatty acid biosynthesis. Carrier of the growing fatty acid chain in fatty acid biosynthesis. The polypeptide is Acyl carrier protein (Geotalea uraniireducens (strain Rf4) (Geobacter uraniireducens)).